We begin with the raw amino-acid sequence, 201 residues long: Peptidyl-prolyl cis-trans isomerase CYP19-4 (201 aa).

Residues 1-23 form the signal peptide; the sequence is MAKASFILLGTLFLFGAIASIQA. One can recognise a PPIase cyclophilin-type domain in the interval 35–198; that stretch reads YFDVEIDGKS…SKVVIADSGE (164 aa).

Belongs to the cyclophilin-type PPIase family. As to quaternary structure, interacts with EMB30/GNOM. As to expression, ubiquitous, mostly in aerial organs (at protein level).

It localises to the cytoplasm. It is found in the membrane. The protein localises to the endoplasmic reticulum. The protein resides in the secreted. It carries out the reaction [protein]-peptidylproline (omega=180) = [protein]-peptidylproline (omega=0). Binds cyclosporin A (CsA). CsA mediates some of its effects via an inhibitory action on PPIase. In terms of biological role, PPIases accelerate the folding of proteins. It catalyzes the cis-trans isomerization of proline imidic peptide bonds in oligopeptides. May be involved during embryogenesis and organ development by regulating the folding of EMB30/GNOM, and thus, by modulating its activity. In Arabidopsis thaliana (Mouse-ear cress), this protein is Peptidyl-prolyl cis-trans isomerase CYP19-4 (CYP19-4).